The sequence spans 338 residues: MSVHIPTLNSATKIKHYYGFKYLLNSSVHTQIYNKLQLQSTYKMDELKVLDLYPGPSQHSAIFRNIFNPKQYVLMDSRPDFVKFIQDNFAGTSMELYQRDPYEWSSYTDMIEKEKRFVPNRQSRDKIHNQFLVMANLTGMIGEGLFMQWLSCIGNKNWLQRFGRVKMLVWVPEATAHKVLARPGSLIRAKCSVVTEAFTDTKLVATSDSSTLQKFSSSLLEGHDPIIFSTRDTWLNSGKPISLLEVNPIDHDIDLDNWDYVTKHLLILKSTPLHTAIDSLGHGGKQYFSEKVEDKLLMDKCPKDLTNKEFVYLTSIFNNWPFKPDIYMDFIDVFQENE.

Residues Leu23, Asp76, Asp100, and Asn136 each contribute to the S-adenosyl-L-methionine site.

This sequence belongs to the class I-like SAM-binding methyltransferase superfamily. rRNA adenine N(6)-methyltransferase family.

It localises to the mitochondrion. Mitochondrial transcription factor that confers selective promoter recognition on the core subunit of the yeast mitochondrial RNA polymerase. Interacts with DNA in a non-specific manner. The sequence is that of Mitochondrial transcription factor 1 (MTF1) from Lachancea kluyveri (Yeast).